A 1338-amino-acid polypeptide reads, in one-letter code: Protein dispatched homolog 3 (1338 aa).

Over 1 to 67 the chain is Cytoplasmic; the sequence is MDTEDDPLLQ…VGWIFTNPYC (67 aa). Residues 68-88 traverse the membrane as a helical segment; it reads AGFILFLGCAIPAVLAVVMFL. The Lumenal segment spans residues 89–406; it reads HYPALDIDIS…YEVRRTFNND (318 aa). Residues 164-196 are disordered; sequence TRAKRSAPQGRTSSPEPRAHPHPGNETSRVTRG. Residues 401–559 enclose the SSD domain; sequence RTFNNDMLLA…LFTMPAALGI (159 aa). A helical membrane pass occupies residues 407-427; it reads MLLAFISSSCIAVLVYILTSC. Ser-428 is a topological domain (cytoplasmic). Residues 429 to 449 traverse the membrane as a helical segment; sequence VFLSFFGIASIGLSCLVALFL. The Lumenal portion of the chain corresponds to 450 to 452; it reads YHV. Residues 453 to 473 traverse the membrane as a helical segment; sequence VFGIQYLGILNGVAAFVIVGI. Topologically, residues 474 to 517 are cytoplasmic; it reads GVDDVFVFINTYRQATHLKDLRLRMIHTIQTAGKATFFTSLTTA. The chain crosses the membrane as a helical span at residues 518–538; that stretch reads AAYAANIFSQIPAVHDFGLFM. Residue Ser-539 is a topological domain, lumenal. Residues 540-560 traverse the membrane as a helical segment; the sequence is LIVSCCWVAVLFTMPAALGIW. Residues 561–672 are Cytoplasmic-facing; sequence TLYVSPLESS…WVLWSAVKSR (112 aa). A helical transmembrane segment spans residues 673–693; that stretch reads WVIVGLFLLVLLLSIFFASRL. Topologically, residues 694–1128 are lumenal; it reads RPASRAPVLF…IFMEIIGVQS (435 aa). The disordered stretch occupies residues 747–768; it reads SLEKKKRGSASPWGSKGSISDT. A helical membrane pass occupies residues 1129-1149; that stretch reads ALYGLILSLVICVAAVAVFTT. His-1150 is a topological domain (cytoplasmic). A helical membrane pass occupies residues 1151–1171; it reads ILLLLPVLLSILGVVCLVVTI. Residues 1172-1237 lie on the Lumenal side of the membrane; that stretch reads MYWSGWEMGA…TIEAIRHVGV (66 aa). Residues 1238-1258 traverse the membrane as a helical segment; that stretch reads AIVSSAVTTVIATVPLFFCII. At 1259-1266 the chain is on the cytoplasmic side; it reads APFAKFGK. The helical transmembrane segment at 1267-1287 threads the bilayer; the sequence is IVALNTGVSILYTLTVSTALL. Residues 1288-1302 are Lumenal-facing; the sequence is SIMGPGTFTRSRTSC. A helical membrane pass occupies residues 1303-1323; sequence LKAVAGVLLAGLLGLCICLAL. Over 1324–1338 the chain is Cytoplasmic; sequence LKGGFKIPLPNGTAL.

The protein belongs to the patched family. As to expression, expressed in retina, hippocampus and cerebellum. Expressed in the ganglion and bipolar cells of the inner and outer nuclear layers of the retina and in Purkinje cells (at protein level). Expressed strongly in brain and retina, weakly in testis and bone marrow.

The protein resides in the endoplasmic reticulum membrane. The protein localises to the nucleus membrane. Its subcellular location is the cytoplasmic vesicle membrane. Its function is as follows. Plays a role in neuronal proliferation and differentiation. Plays a role in the accumulation of cellular cholesterol. Involved in intracellular lipid droplet formation. May contribute to cholesterol homeostasis in neuronal cells. This is Protein dispatched homolog 3 from Gallus gallus (Chicken).